An 888-amino-acid chain; its full sequence is Kinesin-like protein KIF20A (888 aa).

Position 2 is an N-acetylserine (S2). 3 positions are modified to phosphoserine: S7, S14, and S21. Residues 63–506 (KVKVYLRVRP…AKFSAIASQL (444 aa)) form the Kinesin motor domain. Residue 159 to 166 (GVTNSGKT) participates in ATP binding. S527 bears the Phosphoserine; by PLK1 mark. The residue at position 531 (S531) is a Phosphoserine. Coiled-coil stretches lie at residues 559–587 (KEEL…EVQL) and 630–760 (ESLT…ERAC). S667, S683, and S823 each carry phosphoserine. The segment at 761–888 (CHNTGAGKLR…LKSGPFGKKY (128 aa)) is globular. Positions 823–863 (STKKRLGANQENQQPNQQPPGKKPFLRNLLPRTPTCQSSTD) are disordered. T855 is modified (phosphothreonine). Phosphoserine occurs at positions 865, 876, and 881.

Belongs to the TRAFAC class myosin-kinesin ATPase superfamily. Kinesin family. In terms of processing, phosphorylated by PLK1 at Ser-527 during mitosis, creating a docking site for PLK1 and recruiting PLK1 at central spindle.

It is found in the golgi apparatus. Its subcellular location is the cytoplasm. The protein localises to the cytoskeleton. The protein resides in the spindle. Its function is as follows. Mitotic kinesin required for chromosome passenger complex (CPC)-mediated cytokinesis. Following phosphorylation by PLK1, involved in recruitment of PLK1 to the central spindle. Interacts with guanosine triphosphate (GTP)-bound forms of RAB6A and RAB6B. May act as a motor required for the retrograde RAB6 regulated transport of Golgi membranes and associated vesicles along microtubules. Has a microtubule plus end-directed motility. This chain is Kinesin-like protein KIF20A (KIF20A), found in Bos taurus (Bovine).